The chain runs to 236 residues: MSYNLTDPYEIARFIKESKKSTPVKVYVNGDLSEALMDDIEWYGANGFYILIGESDLVAKIILDNKHLIKHFRLENDRRNSAIPMLDLLEVEARIEPGAIIRDKVTIGKNAVVMMGAVINIGAEIGDGTMVDMNAVIGARGKLGKNVHLGAGAVVAGVLEPPSKEPCTVGDNVLIGANSVILEGVKIGAGSVVAAGSVVAEDVPEGVVVAGSPAKIIKSVDDKTKGKTQLLDDLRK.

The protein belongs to the transferase hexapeptide repeat family. DapH subfamily.

The catalysed reaction is (S)-2,3,4,5-tetrahydrodipicolinate + acetyl-CoA + H2O = L-2-acetamido-6-oxoheptanedioate + CoA. It functions in the pathway amino-acid biosynthesis; L-lysine biosynthesis via DAP pathway; LL-2,6-diaminopimelate from (S)-tetrahydrodipicolinate (acetylase route): step 1/3. Functionally, catalyzes the transfer of an acetyl group from acetyl-CoA to tetrahydrodipicolinate. The sequence is that of 2,3,4,5-tetrahydropyridine-2,6-dicarboxylate N-acetyltransferase from Clostridium botulinum (strain Alaska E43 / Type E3).